A 142-amino-acid polypeptide reads, in one-letter code: Mitochondrial import inner membrane translocase subunit TIM22-4 (142 aa).

The next 4 helical transmembrane spans lie at 21–41 (VTSGVMGGGLGLMMGLFLGAL), 70–88 (SCKTFAVMGLVFSAAECIV), 97–113 (TVNTAIAGCVTGGSMSA), and 120–137 (ACIGCAGFAIFSVLIEKF).

It belongs to the Tim17/Tim22/Tim23 family.

It is found in the mitochondrion inner membrane. Essential core component of the TIM22 complex, a complex that mediates the import and insertion of multi-pass transmembrane proteins into the mitochondrial inner membrane. The polypeptide is Mitochondrial import inner membrane translocase subunit TIM22-4 (TIM22-4) (Arabidopsis thaliana (Mouse-ear cress)).